The following is a 351-amino-acid chain: Photosystem II D2 protein (351 aa).

The chain crosses the membrane as a helical span at residues 39 to 59 (CAYLALGAWFTGTTFVSSWYT). H116 is a chlorophyll a binding site. Residues 123–139 (GFCLRQFEIARLVGLRP) traverse the membrane as a helical segment. 2 residues coordinate pheophytin a: Q128 and N141. The chain crosses the membrane as a helical span at residues 151–164 (VFVSVFLLYPLGQA). H196 contributes to the chlorophyll a binding site. The helical transmembrane segment at 206–226 (GALLCAIHGATVENTLFEDGE) threads the bilayer. Positions 213 and 260 each coordinate a plastoquinone. H213 contributes to the Fe cation binding site. H267 lines the Fe cation pocket. A helical membrane pass occupies residues 277 to 293 (GLWVSSIGIVGLALNLR).

It belongs to the reaction center PufL/M/PsbA/D family. As to quaternary structure, PSII is composed of 1 copy each of membrane proteins PsbA, PsbB, PsbC, PsbD, PsbE, PsbF, PsbH, PsbI, PsbJ, PsbK, PsbL, PsbM, PsbT, PsbY, PsbZ, Psb30/Ycf12, at least 3 peripheral proteins of the oxygen-evolving complex and a large number of cofactors. It forms dimeric complexes. Requires The D1/D2 heterodimer binds P680, chlorophylls that are the primary electron donor of PSII, and subsequent electron acceptors. It shares a non-heme iron and each subunit binds pheophytin, quinone, additional chlorophylls, carotenoids and lipids. There is also a Cl(-1) ion associated with D1 and D2, which is required for oxygen evolution. The PSII complex binds additional chlorophylls, carotenoids and specific lipids. as cofactor.

The protein resides in the plastid. It is found in the chloroplast thylakoid membrane. The enzyme catalyses 2 a plastoquinone + 4 hnu + 2 H2O = 2 a plastoquinol + O2. In terms of biological role, photosystem II (PSII) is a light-driven water:plastoquinone oxidoreductase that uses light energy to abstract electrons from H(2)O, generating O(2) and a proton gradient subsequently used for ATP formation. It consists of a core antenna complex that captures photons, and an electron transfer chain that converts photonic excitation into a charge separation. The D1/D2 (PsbA/PsbD) reaction center heterodimer binds P680, the primary electron donor of PSII as well as several subsequent electron acceptors. D2 is needed for assembly of a stable PSII complex. This is Photosystem II D2 protein from Cyanidium caldarium (Red alga).